Reading from the N-terminus, the 156-residue chain is Small ribosomal subunit protein uS7 (156 aa).

Belongs to the universal ribosomal protein uS7 family. In terms of assembly, part of the 30S ribosomal subunit. Contacts proteins S9 and S11.

One of the primary rRNA binding proteins, it binds directly to 16S rRNA where it nucleates assembly of the head domain of the 30S subunit. Is located at the subunit interface close to the decoding center, probably blocks exit of the E-site tRNA. The chain is Small ribosomal subunit protein uS7 from Rhizobium johnstonii (strain DSM 114642 / LMG 32736 / 3841) (Rhizobium leguminosarum bv. viciae).